The sequence spans 364 residues: tRNA 2-selenouridine synthase (364 aa).

The region spanning 14 to 137 is the Rhodanese domain; the sequence is LIADTPIIDV…LRQTAIQATI (124 aa). Cysteine 97 (S-selanylcysteine intermediate) is an active-site residue.

This sequence belongs to the SelU family. In terms of assembly, monomer.

The catalysed reaction is 5-methylaminomethyl-2-thiouridine(34) in tRNA + selenophosphate + (2E)-geranyl diphosphate + H2O + H(+) = 5-methylaminomethyl-2-selenouridine(34) in tRNA + (2E)-thiogeraniol + phosphate + diphosphate. It carries out the reaction 5-methylaminomethyl-2-thiouridine(34) in tRNA + (2E)-geranyl diphosphate = 5-methylaminomethyl-S-(2E)-geranyl-thiouridine(34) in tRNA + diphosphate. It catalyses the reaction 5-methylaminomethyl-S-(2E)-geranyl-thiouridine(34) in tRNA + selenophosphate + H(+) = 5-methylaminomethyl-2-(Se-phospho)selenouridine(34) in tRNA + (2E)-thiogeraniol. The enzyme catalyses 5-methylaminomethyl-2-(Se-phospho)selenouridine(34) in tRNA + H2O = 5-methylaminomethyl-2-selenouridine(34) in tRNA + phosphate. In terms of biological role, involved in the post-transcriptional modification of the uridine at the wobble position (U34) of tRNA(Lys), tRNA(Glu) and tRNA(Gln). Catalyzes the conversion of 2-thiouridine (S2U-RNA) to 2-selenouridine (Se2U-RNA). Acts in a two-step process involving geranylation of 2-thiouridine (S2U) to S-geranyl-2-thiouridine (geS2U) and subsequent selenation of the latter derivative to 2-selenouridine (Se2U) in the tRNA chain. This is tRNA 2-selenouridine synthase from Escherichia coli (strain K12 / MC4100 / BW2952).